Reading from the N-terminus, the 77-residue chain is Large ribosomal subunit protein bL28 (77 aa).

It belongs to the bacterial ribosomal protein bL28 family.

This chain is Large ribosomal subunit protein bL28, found in Polynucleobacter asymbioticus (strain DSM 18221 / CIP 109841 / QLW-P1DMWA-1) (Polynucleobacter necessarius subsp. asymbioticus).